The primary structure comprises 261 residues: Adenosylcobinamide-GDP ribazoletransferase (261 aa).

Transmembrane regions (helical) follow at residues 9–29, 41–61, 64–84, 114–134, 141–161, 196–216, and 235–255; these read LELF…VSLP, YFAL…SLAT, FSTN…TGAF, IGTY…LLLT, SLVP…ASLI, ATLL…SLIF, and CLGA…LAFL.

It belongs to the CobS family. It depends on Mg(2+) as a cofactor.

The protein resides in the cell inner membrane. It carries out the reaction alpha-ribazole + adenosylcob(III)inamide-GDP = adenosylcob(III)alamin + GMP + H(+). It catalyses the reaction alpha-ribazole 5'-phosphate + adenosylcob(III)inamide-GDP = adenosylcob(III)alamin 5'-phosphate + GMP + H(+). The protein operates within cofactor biosynthesis; adenosylcobalamin biosynthesis; adenosylcobalamin from cob(II)yrinate a,c-diamide: step 7/7. Its function is as follows. Joins adenosylcobinamide-GDP and alpha-ribazole to generate adenosylcobalamin (Ado-cobalamin). Also synthesizes adenosylcobalamin 5'-phosphate from adenosylcobinamide-GDP and alpha-ribazole 5'-phosphate. The polypeptide is Adenosylcobinamide-GDP ribazoletransferase (Vibrio cholerae serotype O1 (strain ATCC 39541 / Classical Ogawa 395 / O395)).